The chain runs to 98 residues: Small proline-rich protein 2B (98 aa).

5 consecutive repeat copies span residues 21-29 (PKCPEPCPP), 30-38 (PKCPEPCPP), 39-47 (PVCCEPCPP), 48-56 (PKCPEPCPP), and 57-65 (PVCCEPCPP). A 5 X 9 AA approximate tandem repeats region spans residues 21–65 (PKCPEPCPPPKCPEPCPPPVCCEPCPPPKCPEPCPPPVCCEPCPP).

Belongs to the cornifin (SPRR) family. As to expression, expressed in uterus.

The protein localises to the cytoplasm. In terms of biological role, cross-linked envelope protein of keratinocytes. It is a keratinocyte protein that first appears in the cell cytosol, but ultimately becomes cross-linked to membrane proteins by transglutaminase. All that results in the formation of an insoluble envelope beneath the plasma membrane. This chain is Small proline-rich protein 2B (Sprr2b), found in Mus musculus (Mouse).